The chain runs to 691 residues: MARTQAEPPASQPDVRAAWLRDQLERANYAYYVLDQPDLPDAEYDRLFRELQQLESDHPDLVTPDSPTQRVGGAVASGFTPVVHDAPMLSLNNGFADDDIVAFDKRVADALGKTTDLAGSVTDPVEYACELKFDGLAISLRYEHGVFVQASTRGDGTTGEDVTENVRTIRSIPLKLKGDRVPAVLDVRGEVLMFKRDFARLNERQRAAEQREFANPRNAAAGSLRQLDPKITAQRPLSFFAYGIGVLDGMPMPDTHSALLDWYEALGLPVNRERAVVYGAQGLLDFFRKVGEKRESLPYDIDGVVYKVNRRDEQDRLGFVSRAPRFALAHKFPAQEALTKLVAIGVQVGRTGAITPVARLEPVFVGGATVTNATLHNEDEVRRKDIRIGDTVIVRRAGDVIPEVVGAVLDRRPADAAEFVMPTECPVCGSKIERLPDEAIARCTGGLFCPAQRKQALWHFAQRRALDIDGLGEKIIDQLVELNLVRTPADLFNLGFATLAELDRFAEKSAQNLLDSLEKAKHTTLARFIYALGIRHVGESTAKDLAKHFGSLDPIMNATIDELLEVNDVGPIVAESIHQFFAEEHNRTVIEQLRAPGKVTWPEGPPAPKAPQGVLAGKTVVLTGTLPNLTRDDAKEMLEAAGAKVAGSVSKKTDYVIAGAEAGSKLAKAEALGIPVLDEDGLHQLLEGNTR.

NAD(+)-binding positions include 41–45 (DAEYD), 90–91 (SL), and Glu-130. Catalysis depends on Lys-132, which acts as the N6-AMP-lysine intermediate. NAD(+) is bound by residues Arg-153, Glu-190, Lys-307, and Lys-331. Residues Cys-425, Cys-428, Cys-443, and Cys-449 each coordinate Zn(2+). Residues 610 to 691 (APQGVLAGKT…LHQLLEGNTR (82 aa)) form the BRCT domain.

The protein belongs to the NAD-dependent DNA ligase family. LigA subfamily. Requires Mg(2+) as cofactor. The cofactor is Mn(2+).

The catalysed reaction is NAD(+) + (deoxyribonucleotide)n-3'-hydroxyl + 5'-phospho-(deoxyribonucleotide)m = (deoxyribonucleotide)n+m + AMP + beta-nicotinamide D-nucleotide.. DNA ligase that catalyzes the formation of phosphodiester linkages between 5'-phosphoryl and 3'-hydroxyl groups in double-stranded DNA using NAD as a coenzyme and as the energy source for the reaction. It is essential for DNA replication and repair of damaged DNA. This is DNA ligase from Burkholderia multivorans (strain ATCC 17616 / 249).